A 394-amino-acid polypeptide reads, in one-letter code: Cytochrome b561 and DOMON domain-containing protein At4g12980 (394 aa).

Positions Met-1 to Ser-24 are cleaved as a signal peptide. One can recognise a DOMON domain in the interval Leu-49–Gly-169. The Cytochrome b561 domain maps to Gly-184–Leu-381. A run of 2 helical transmembrane segments spans residues Ile-220–Ala-240 and Ala-252–Trp-272. Residues His-221, His-257, and His-290 each contribute to the heme b site. Residues Asn-292–Pro-312 traverse the membrane as a helical segment. His-326 is a heme b binding site. A run of 2 helical transmembrane segments spans residues Gly-328–Leu-348 and Val-361–Leu-381.

Heme b serves as cofactor.

The protein localises to the membrane. Its function is as follows. May act as a catecholamine-responsive trans-membrane electron transporter. The sequence is that of Cytochrome b561 and DOMON domain-containing protein At4g12980 from Arabidopsis thaliana (Mouse-ear cress).